We begin with the raw amino-acid sequence, 237 residues long: UPF0173 metal-dependent hydrolase HQ_3368A (237 aa).

It belongs to the UPF0173 family.

The protein is UPF0173 metal-dependent hydrolase HQ_3368A of Haloquadratum walsbyi (strain DSM 16790 / HBSQ001).